A 575-amino-acid chain; its full sequence is Probable lysosomal cobalamin transporter (575 aa).

Helical transmembrane passes span 8–28, 46–66, 95–115, 144–164, and 188–208; these read LIWVVYAVVVVVLFAVASVFI, IVAITSLLATILLLPVDVALV, LVYYILYSLDILLCLLVVPFV, YTLSFIAILIILFLVGVFVPI, and ALTFALGLLITIGMYVYALHT. Residue Asn233 is glycosylated (N-linked (GlcNAc...) asparagine). A run of 4 helical transmembrane segments spans residues 314 to 334, 376 to 396, 420 to 440, and 504 to 524; these read LVGLILLLLVLLIWVSMILTA, AIFTMLVLLLFFGTVVGIATV, VMTAILMLSILALNYSISMIV, and FGAIFFWSQFAFIGVYLLALI. Over residues 537–549 the composition is skewed to acidic residues; that stretch reads QLDEDAEEAEEEA. The segment at 537–556 is disordered; sequence QLDEDAEEAEEEALLSGSRR.

The protein belongs to the LIMR family. LMBRD1 subfamily.

Its subcellular location is the lysosome membrane. Probable lysosomal cobalamin transporter. Required to export cobalamin from lysosomes allowing its conversion to cofactors. The protein is Probable lysosomal cobalamin transporter of Emericella nidulans (strain FGSC A4 / ATCC 38163 / CBS 112.46 / NRRL 194 / M139) (Aspergillus nidulans).